A 166-amino-acid polypeptide reads, in one-letter code: NAD(P)H-quinone oxidoreductase subunit I, chloroplastic (166 aa).

4Fe-4S ferredoxin-type domains follow at residues 55–84 and 95–124; these read GRIH…VDWK and LNYS…MTEE. [4Fe-4S] cluster-binding residues include Cys-64, Cys-67, Cys-70, Cys-74, Cys-104, Cys-107, Cys-110, and Cys-114.

Belongs to the complex I 23 kDa subunit family. NDH is composed of at least 16 different subunits, 5 of which are encoded in the nucleus. It depends on [4Fe-4S] cluster as a cofactor.

It is found in the plastid. Its subcellular location is the chloroplast thylakoid membrane. It catalyses the reaction a plastoquinone + NADH + (n+1) H(+)(in) = a plastoquinol + NAD(+) + n H(+)(out). It carries out the reaction a plastoquinone + NADPH + (n+1) H(+)(in) = a plastoquinol + NADP(+) + n H(+)(out). Its function is as follows. NDH shuttles electrons from NAD(P)H:plastoquinone, via FMN and iron-sulfur (Fe-S) centers, to quinones in the photosynthetic chain and possibly in a chloroplast respiratory chain. The immediate electron acceptor for the enzyme in this species is believed to be plastoquinone. Couples the redox reaction to proton translocation, and thus conserves the redox energy in a proton gradient. The chain is NAD(P)H-quinone oxidoreductase subunit I, chloroplastic from Hulsea algida (Pacific hulsea).